The primary structure comprises 139 residues: MRVLAIDWGEKYVGLAISDPLRIIAQGLDVWEIKGEEDFVSRLKRLVEDYQVKEIVLGYPISLRGHENERTQKVRHIAELIESVIGIPVKFVDERLTTMEAEKVLLEGDIKRKKRKLLKNKQAAVIILQKYLDSSSLDT.

Belongs to the YqgF nuclease family.

Its subcellular location is the cytoplasm. In terms of biological role, could be a nuclease involved in processing of the 5'-end of pre-16S rRNA. In Dictyoglomus thermophilum (strain ATCC 35947 / DSM 3960 / H-6-12), this protein is Putative pre-16S rRNA nuclease.